Reading from the N-terminus, the 699-residue chain is Elongation factor G (699 aa).

One can recognise a tr-type G domain in the interval 8 to 283 (EHIRNIGICA…AVVDFLPSPI (276 aa)). GTP-binding positions include 17 to 24 (AHIDAGKT), 81 to 85 (DTPGH), and 135 to 138 (NKMD).

Belongs to the TRAFAC class translation factor GTPase superfamily. Classic translation factor GTPase family. EF-G/EF-2 subfamily.

It is found in the cytoplasm. In terms of biological role, catalyzes the GTP-dependent ribosomal translocation step during translation elongation. During this step, the ribosome changes from the pre-translocational (PRE) to the post-translocational (POST) state as the newly formed A-site-bound peptidyl-tRNA and P-site-bound deacylated tRNA move to the P and E sites, respectively. Catalyzes the coordinated movement of the two tRNA molecules, the mRNA and conformational changes in the ribosome. The sequence is that of Elongation factor G from Rickettsia felis (strain ATCC VR-1525 / URRWXCal2) (Rickettsia azadi).